A 182-amino-acid chain; its full sequence is Triplatin (182 aa).

An N-terminal signal peptide occupies residues 1 to 18; it reads MKMIIAVTFLGIVTIAFA. Disulfide bonds link Cys21–Cys133, Cys55–Cys177, and Cys88–Cys105.

The protein belongs to the calycin superfamily. Triabin family. As to expression, expressed in salivary glands.

Its subcellular location is the secreted. In terms of biological role, inhibits platelet aggregation and vasoconstriction through binding to distinct eicosanoids involved in inflammation (acts as a scavenger), and has a role in inhibiting host innate immunity by impairing platelet-assisted formation of neutrophil extracellular traps (NETs). Inhibits platelet aggregation by collagen, and low doses of thromboxane A2 mimetic (TXA2 mimetic), and arachidonic acid (AA) without affecting aggregation induced by ADP, convulxin (GP6 agonist), and PMA. Binds to TXA2, TXB2, prostaglandine H2 mimetic (PGH2 mimetic), PGJ2, and PGF2alpha. Binding is not observed to leukotrienes, AA, and biogenic amines (PGE1, 5(S)-HETE, 12(S)-HETE, 20-HETE, norepinephrine, epinephrine, serotonin, LTC4 and ADP). Induces relaxation of aorta rat previously contracted with TXA2 mimetic. Moreover, it also impairs platelet-assisted formation of neutrophil extracellular traps (NETs). NETs are web-like structures of DNA and proteins that play an important role in killing of pathogens. In addition, NETs are implicated in thrombus formation. In vivo, this protein exhibits antithrombotic activity in two distinct mice models that are highly dependent on platelets. It is noteworthy that it inhibits thrombosis without promoting excessive bleeding. This Triatoma infestans (Assassin bug) protein is Triplatin.